We begin with the raw amino-acid sequence, 538 residues long: [Pyruvate dehydrogenase [acetyl-transferring]]-phosphatase 1, mitochondrial (538 aa).

The N-terminal 71 residues, 1 to 71 (MPAPTQLFFP…WWQYTQGRRY (71 aa)), are a transit peptide targeting the mitochondrion. The 417-residue stretch at 109-525 (VLGFDSNQLP…DDITIIVVQF (417 aa)) folds into the PPM-type phosphatase domain. The Mn(2+) site is built by aspartate 144 and glycine 145. Lysine 202 is modified (N6-acetyllysine). Mn(2+) contacts are provided by aspartate 418 and aspartate 516.

It belongs to the PP2C family. As to quaternary structure, heterodimer of a catalytic (PDP1) and a regulatory (PDPR) subunit. It depends on Mn(2+) as a cofactor. Requires Mg(2+) as cofactor.

It localises to the mitochondrion. The enzyme catalyses O-phospho-L-seryl-[pyruvate dehydrogenase E1 alpha subunit] + H2O = L-seryl-[pyruvate dehydrogenase E1 alpha subunit] + phosphate. Its activity is regulated as follows. Magnesium-dependent and calcium-stimulated. PDP1 activity strongly depends on its Ca(2+)-dependent binding to the lipoyl domain of E2 subunit of component of the pyruvate dehydrogenase complex. Functionally, mitochondrial enzyme that catalyzes the dephosphorylation and concomitant reactivation of the alpha subunit of the E1 component of the pyruvate dehydrogenase complex (PDC), thereby stimulating the conversion of pyruvate into acetyl-CoA. This is [Pyruvate dehydrogenase [acetyl-transferring]]-phosphatase 1, mitochondrial (PDP1) from Bos taurus (Bovine).